We begin with the raw amino-acid sequence, 421 residues long: F-box only protein 5 (421 aa).

Ser85 carries the phosphoserine modification. Residues Glu114–Leu219 form an interaction with EVI5 region. The F-box domain occupies Ala223 to Thr273. Residues Asn236–Lys313 are sufficient for interaction with RPS6KA2; Prevents association of CDC20 with RPS6KA2. The interval Asn236 to Cys383 is requires for efficient binding to CDC20. The interval Ser280–Leu421 is inhibits APC ubiquitin ligase activity. The interval Arg296–Leu299 is competitively blocks access of APC substrates to the D-box coreceptor formed by FZR1 and ANAPC10. A ZBR-type zinc finger spans residues Ser348–Gly396. Positions 352, 355, 370, 375, 380, 383, 388, and 393 each coordinate Zn(2+). Positions Cys352–Leu394 are allows a rapid multiple mono-ubiquitination of the APC substrate, but strongly inhibits the slow ubiquitin chain elongation catalyzed by UBCH10. The tract at residues Thr411–Leu421 is sufficient to suppress UBE2S activity; essential for interaction with UBE2S; competitively inhibits the rapide ubiquitin chain elongation by UBE2D1 which blocks UBE2D1 with APC; indispensable for recruitment and position of FBXO5 to the catalytic site of APC; abrogates the inhibition of ubiquitin chain assembly primarily catalyzed by UBE2S; inhibits the ubiquitination by either UBE2C or UBE2D1.

As to quaternary structure, part of a SCF (SKP1-cullin-F-box) protein ligase complex. Interacts with BTRC; mediates proteolysis by the SCF ubiquitin ligase complex leading to activation of APC in late mitosis and subsequent mitotic progression. Interacts with FZR1/CDH1 and the N-terminal substrate-binding domain of CDC20; prevents APC activation. Also interacts with EVI5 which blocks its phosphorylation by PLK1 and prevents its subsequent binding to BTRC and degradation. Interacts simultaneously with anaphase promoting complex (APC), through at least ANAPC2, CDC23, CDC27, the APC substrate GMNN and the APC activator FZR1. Interacts with UBE2S; interferes with the activity of UBE2S mainly by disrupting the dynamic electrostatic association between the C-terminal tail of UBE2S and ANAPC2. Interacts with RPS6KA2; cooperates to induce the metaphase arrest of early blastomeres; increases and stabilizes interaction of FBXO5 with CDC20. Phosphorylation by CDK2 and subsequently by PLK1 triggers degradation during early mitosis through ubiquitin-mediated proteolysis by the SCF ubiquitin ligase complex containing the F-box protein BTRC. This degradation is necessary for the activation of APC in late mitosis and subsequent mitotic progression. Phosphorylated by RPS6KA2; increases and stabilizes interaction with CDC20. In terms of processing, ubiquitinated by the SCF(BTRC) complex following phosphorylation by PLK1. Undergoes both 'Lys-11' and 'Lys-48'-linked polyubiquitination by APC-FZR1 complex leading to degradation during G1 phase by the proteasome. Degraded through the SCF(BTRC) complex; degradation occurs during oocyte maturation, between germinal vesicle breakdown (GVBD) and meiosis I, and is required for the meiosis I-meiosis II transition. In terms of tissue distribution, expressed in oocytes and granulosa cells. Expressed in proliferating cells compartments in hair follicle and skin epidermis, spermatogonia, and intestinal crypts.

Its subcellular location is the nucleus. The protein resides in the cytoplasm. It is found in the cytoskeleton. The protein localises to the spindle. It functions in the pathway protein modification; protein ubiquitination. Functionally, regulator of APC activity during mitotic and meiotic cell cycle. During mitotic cell cycle plays a role as both substrate and inhibitor of APC-FZR1 complex. During G1 phase, plays a role as substrate of APC-FZR1 complex E3 ligase. Then switches as an inhibitor of APC-FZR1 complex during S and G2 leading to cell-cycle commitment. As APC inhibitor, prevents the degradation of APC substrates at multiple levels: by interacting with APC and blocking access of APC substrates to the D-box co-receptor, formed by FZR1 and ANAPC10; by suppressing ubiquitin ligation and chain elongation by APC by preventing the UBE2C and UBE2S activities. Plays a role in genome integrity preservation by coordinating DNA replication with mitosis through APC inhibition in interphase to stabilize CCNA2 and GMNN in order to promote mitosis and prevent rereplication and DNA damage-induced cellular senescence. During oocyte maturation, plays a role in meiosis through inactivation of APC-FZR1 complex. Inhibits APC through RPS6KA2 interaction that increases FBXO5 affiniy for CDC20 leading to the metaphase arrest of the second meiotic division before fertilization. Controls entry into the first meiotic division through inactivation of APC-FZR1 complex. Promotes migration and osteogenic differentiation of mesenchymal stem cells. This Mus musculus (Mouse) protein is F-box only protein 5.